The primary structure comprises 347 residues: Gas vesicle ATPase GvpN1 (347 aa).

The span at 1-11 shows a compositional bias: basic residues; that stretch reads MTNESRKRKVR. Residues 1-64 are disordered; that stretch reads MTNESRKRKV…EGFVPEEQSF (64 aa). A compositionally biased stretch (basic and acidic residues) spans 18–55; it reads SRGDKKQGRSQSRDDKEIERLERQNDARGQESSTHVDE. 91–98 contacts ATP; it reads GPTGCGKT.

This sequence belongs to the CbbQ/NirQ/NorQ/GpvN family. In terms of assembly, forms homodimers, forms a GvpN1-GvpO1 heterodimer, interacts with GvpC1 (via the latter's C-terminus) and GvpL, might interact with GvpA1.

It localises to the gas vesicle. The protein resides in the cytoplasm. The enzyme catalyses ATP + H2O = ADP + phosphate + H(+). An ATPase that functions in gas vesicle formation. A minor component of the gas vesicle, also found in soluble extracts. Probably enhances gas vesicle formation. Gas vesicles are hollow, gas filled proteinaceous nanostructures found in several microbial planktonic microorganisms. They allow positioning of halobacteria at the optimal depth for growth in the poorly aerated, shallow brine pools of their habitat. Functionally, expression of a 9.5 kb p-vac DNA fragment containing 2 divergently transcribed regions (gvpD-gvpE-gvpF-gvpG-gvpH-gvpI-gvpJ-gvpK-gvpL-gvpM and gvpA-gvpC-gvpN-gvpO) allows H.volcanii to produce gas vesicles. A similar region restores gas vesicle production in H.halobium without the p-vac locus, but which still have the c-vac locus. The chain is Gas vesicle ATPase GvpN1 (gvpN11) from Halobacterium salinarum (strain ATCC 700922 / JCM 11081 / NRC-1) (Halobacterium halobium).